The chain runs to 201 residues: Small ribosomal subunit protein uS4c (201 aa).

Residues 13 to 43 are disordered; the sequence is RRLGDLPGLSRKAIKRPYPPGEHGQKPRKPS. The S4 RNA-binding domain occupies 90–154; the sequence is MRLDNTIFRL…SKQLVESYLA (65 aa).

Belongs to the universal ribosomal protein uS4 family. In terms of assembly, part of the 30S ribosomal subunit. Contacts protein S5. The interaction surface between S4 and S5 is involved in control of translational fidelity.

The protein localises to the plastid. It localises to the chloroplast. In terms of biological role, one of the primary rRNA binding proteins, it binds directly to 16S rRNA where it nucleates assembly of the body of the 30S subunit. Functionally, with S5 and S12 plays an important role in translational accuracy. In Porphyra purpurea (Red seaweed), this protein is Small ribosomal subunit protein uS4c (rps4).